A 191-amino-acid chain; its full sequence is Fe/S biogenesis protein NfuA (191 aa).

[4Fe-4S] cluster contacts are provided by cysteine 149 and cysteine 152.

This sequence belongs to the NfuA family. As to quaternary structure, homodimer. The cofactor is [4Fe-4S] cluster.

Involved in iron-sulfur cluster biogenesis. Binds a 4Fe-4S cluster, can transfer this cluster to apoproteins, and thereby intervenes in the maturation of Fe/S proteins. Could also act as a scaffold/chaperone for damaged Fe/S proteins. The protein is Fe/S biogenesis protein NfuA of Serratia proteamaculans (strain 568).